The primary structure comprises 249 residues: Ditrans,polycis-undecaprenyl-diphosphate synthase ((2E,6E)-farnesyl-diphosphate specific) (249 aa).

Residue Asp-18 is part of the active site. Asp-18 provides a ligand contact to Mg(2+). Substrate-binding positions include 19-22 (GNNR), Phe-23, Lys-31, His-35, and 63-65 (SSE). Catalysis depends on Asn-66, which acts as the Proton acceptor. Substrate contacts are provided by residues Trp-67, Arg-69, Arg-186, and 192–194 (RLS). Glu-205 lines the Mg(2+) pocket.

Belongs to the UPP synthase family. In terms of assembly, homodimer. The cofactor is Mg(2+).

The catalysed reaction is 8 isopentenyl diphosphate + (2E,6E)-farnesyl diphosphate = di-trans,octa-cis-undecaprenyl diphosphate + 8 diphosphate. Its function is as follows. Catalyzes the sequential condensation of isopentenyl diphosphate (IPP) with (2E,6E)-farnesyl diphosphate (E,E-FPP) to yield (2Z,6Z,10Z,14Z,18Z,22Z,26Z,30Z,34E,38E)-undecaprenyl diphosphate (di-trans,octa-cis-UPP). UPP is the precursor of glycosyl carrier lipid in the biosynthesis of bacterial cell wall polysaccharide components such as peptidoglycan and lipopolysaccharide. The polypeptide is Ditrans,polycis-undecaprenyl-diphosphate synthase ((2E,6E)-farnesyl-diphosphate specific) (Acinetobacter baylyi (strain ATCC 33305 / BD413 / ADP1)).